Here is a 368-residue protein sequence, read N- to C-terminus: p21-activated protein kinase-interacting protein 1-like (368 aa).

WD repeat units follow at residues 45-82 (AHTA…EHGA), 85-123 (HHDG…CLKT), 126-165 (AHKG…SAFI), 207-245 (AFTK…CVCE), and 248-289 (AHEN…IESP).

The protein localises to the nucleus. The protein resides in the nucleolus. In terms of biological role, negatively regulates the PAK1 kinase. PAK1 is a member of the PAK kinase family, which has been shown to play a positive role in the regulation of signaling pathways involving MAPK8 and RELA. PAK1 exists as an inactive homodimer, which is activated by binding of small GTPases such as CDC42 to an N-terminal regulatory domain. PAK1IP1 also binds to the N-terminus of PAK1, and inhibits the specific activation of PAK1 by CDC42. May be involved in ribosomal large subunit assembly. The protein is p21-activated protein kinase-interacting protein 1-like (pak1ip1) of Danio rerio (Zebrafish).